A 137-amino-acid chain; its full sequence is MLSLNQEVHGPKTSEVYGFVGSISIVVATVIFLIWGYVPDKFLESIGIYYYPSKYWAMAMPMYSMVTLLVALVFYIGLNFMSTSKPTSLNTLFDDYSREDVNFLPLMKNGEDRPIDPISDIDITRINDLMFDSHLAK.

Helical transmembrane passes span 16–36 (VYGF…LIWG) and 58–78 (MAMP…YIGL).

It belongs to the PIGP family.

Its subcellular location is the membrane. The catalysed reaction is a 1,2-diacyl-sn-glycero-3-phospho-(1D-myo-inositol) + UDP-N-acetyl-alpha-D-glucosamine = a 6-(N-acetyl-alpha-D-glucosaminyl)-1-(1,2-diacyl-sn-glycero-3-phospho)-1D-myo-inositol + UDP + H(+). The protein operates within glycolipid biosynthesis; glycosylphosphatidylinositol-anchor biosynthesis. In terms of biological role, part of the complex catalyzing the transfer of N-acetylglucosamine from UDP-N-acetylglucosamine to phosphatidylinositol, the first step of GPI biosynthesis. The protein is Phosphatidylinositol N-acetylglucosaminyltransferase subunit P of Arabidopsis thaliana (Mouse-ear cress).